Here is a 188-residue protein sequence, read N- to C-terminus: MGFYALLLIALGMSMDAFAVALAKGAAVRMPPRKIAATALVFGTVEALTPLAGWVGGFYAKPFISEWDHWVAFVLLGGLGLKMMREGLSGEAEDVRESKRESLWMTVLTAFGTSIDSMIVGVGLAFMEVNIAFAAAIIGMATTVMVAVGLTAGRALGVLFGRCAEFAGGLVLIAIGTWTLLSHLGLIQ.

Helical transmembrane passes span 3–23 (FYAL…VALA), 35–55 (IAAT…AGWV), 63–83 (FISE…GLKM), 104–126 (WMTV…GLAF), 140–160 (MATT…GVLF), and 167–187 (AGGL…LGLI).

Belongs to the MntP (TC 9.B.29) family.

Its subcellular location is the cell inner membrane. Its function is as follows. Probably functions as a manganese efflux pump. The polypeptide is Putative manganese efflux pump MntP (Neisseria meningitidis serogroup B (strain ATCC BAA-335 / MC58)).